Reading from the N-terminus, the 324-residue chain is Carbonic anhydrase, chloroplastic (324 aa).

This sequence belongs to the beta-class carbonic anhydrase family. In terms of assembly, homohexamer.

Its subcellular location is the plastid. It is found in the chloroplast stroma. The catalysed reaction is hydrogencarbonate + H(+) = CO2 + H2O. Reversible hydration of carbon dioxide. The sequence is that of Carbonic anhydrase, chloroplastic from Hordeum vulgare (Barley).